A 345-amino-acid chain; its full sequence is Molybdate/tungstate import ATP-binding protein WtpC (345 aa).

In terms of domain architecture, ABC transporter spans 2 to 231 (LKVESISKDY…PKSEEVARFL (230 aa)). 33–40 (GPSGSGKT) provides a ligand contact to ATP. In terms of domain architecture, Mop spans 280–345 (KTSARNVFKA…FKASAIHVFP (66 aa)).

It belongs to the ABC transporter superfamily. Sulfate/tungstate importer (TC 3.A.1.6) family. As to quaternary structure, the complex is composed of two ATP-binding proteins (WtpC), two transmembrane proteins (WtpB) and a solute-binding protein (WtpA).

The protein resides in the cell membrane. The enzyme catalyses tungstate(in) + ATP + H2O = tungstate(out) + ADP + phosphate + H(+). Part of the ABC transporter complex WtpABC involved in molybdate/tungstate import. Responsible for energy coupling to the transport system. The sequence is that of Molybdate/tungstate import ATP-binding protein WtpC (wtpC) from Pyrococcus horikoshii (strain ATCC 700860 / DSM 12428 / JCM 9974 / NBRC 100139 / OT-3).